Consider the following 99-residue polypeptide: Small ribosomal subunit protein uS14m (99 aa).

This sequence belongs to the universal ribosomal protein uS14 family.

Its subcellular location is the mitochondrion. This is Small ribosomal subunit protein uS14m (RPS14) from Oenothera berteroana (Bertero's evening primrose).